Here is an 89-residue protein sequence, read N- to C-terminus: EADLALGKAVFDGNCAACHAGGGNNVIPDHTLQKAAIEQFLDGGFNIEAIVYQIENGKGAMPAWDGRLDEDEIAGVAAYVYDQAAGNKW.

Residues cysteine 15, cysteine 18, histidine 19, and methionine 61 each contribute to the heme c site.

It belongs to the cytochrome c family. PetJ subfamily. As to quaternary structure, monomer. Post-translationally, binds 1 heme c group covalently per subunit.

It localises to the plastid. The protein localises to the chloroplast thylakoid lumen. Functionally, functions as an electron carrier between membrane-bound cytochrome b6-f and photosystem I in oxygenic photosynthesis. The protein is Cytochrome c6 (petJ) of Chlorolobion braunii (Green alga).